A 33-amino-acid polypeptide reads, in one-letter code: Ranatuerin-1T (33 aa).

Cys-27 and Cys-33 are disulfide-bonded.

As to expression, expressed by the skin glands.

It localises to the secreted. Functionally, antibacterial activity against Gram-positive bacterium S.aureus and Gram-negative bacterium E.coli. No activity against C.albicans. This chain is Ranatuerin-1T, found in Rana temporaria (European common frog).